The sequence spans 601 residues: Vesicular glutamate transporter 3 (601 aa).

Residues 1–89 are Cytoplasmic-facing; that stretch reads MPFKAFDTFK…CSCCGIPKRY (89 aa). Residues 90 to 110 form a helical membrane-spanning segment; it reads IIAVMSGLGFCISFGIRCNLG. The Vesicular segment spans residues 111–143; it reads VAIVEMVNNSTVYVDGKPEIQTAQFNWDPETVG. A glycan (N-linked (GlcNAc...) asparagine) is linked at N119. The helical transmembrane segment at 144–164 threads the bilayer; the sequence is LIHGSFFWGYIVTQIPGGFIS. Topologically, residues 165-166 are cytoplasmic; sequence NK. A helical transmembrane segment spans residues 167–187; the sequence is FAASRVFGAAIFLTSTLNMFI. At 188 to 195 the chain is on the vesicular side; that stretch reads PSAARVHY. The chain crosses the membrane as a helical span at residues 196-216; it reads GCVMGVRILQGLVEGVTYPAC. Residues 217–234 lie on the Cytoplasmic side of the membrane; that stretch reads HGMWSKWAPPLERSRLAT. A helical membrane pass occupies residues 235–255; sequence TSFCGSYAGAVVAMPLAGVLV. The Vesicular portion of the chain corresponds to 256-262; that stretch reads QYIGWAS. A helical membrane pass occupies residues 263 to 283; sequence VFYIYGMFGIIWYMFWLLQAY. At 284-327 the chain is on the cytoplasmic side; the sequence is ECPAAHPTISNAERTYIETSIGEGANLASLSKFNTPWRRFFTSL. Residues 328-348 traverse the membrane as a helical segment; the sequence is PVYAIIVANFCRSWTFYLLLI. Residues 349–366 are Vesicular-facing; it reads SQPAYFEEVFGFAISKVG. A helical membrane pass occupies residues 367–387; it reads LLSAVPHMVMTIVVPIGGQLA. Over 388-403 the chain is Cytoplasmic; the sequence is DYLRSRKILTTTAVRK. Residues 404–424 traverse the membrane as a helical segment; sequence IMNCGGFGMEATLLLVVGFSH. Topologically, residues 425-426 are vesicular; sequence TK. A helical membrane pass occupies residues 427-447; sequence GVAISFLVLAVGFSGFAISGF. The Cytoplasmic segment spans residues 448–460; the sequence is NVNHLDIAPRYAS. A helical membrane pass occupies residues 461-481; the sequence is ILMGISNGVGTLSGMVCPLIV. Over 482 to 494 the chain is Vesicular; the sequence is GAMTKHKTREEWQ. Residues 495–515 form a helical membrane-spanning segment; sequence NVFLIAALVHYSGVIFYGVFA. Residues 516–598 are Cytoplasmic-facing; sequence SGEKQDWADP…LSYQAEGDFS (83 aa). Positions 576–601 are disordered; it reads RQQRESAFDGEEPLSYQAEGDFSETS.

Belongs to the major facilitator superfamily. Sodium/anion cotransporter family. VGLUT subfamily. Expressed in restricted areas of the brain. Highest expression is found in the neurons of the basal forebrain, the hippocampal formation, and the majority of the neurons of the mesencephalic raphe nuclei. Expressed in inner hair cells of the ear.

It localises to the cytoplasmic vesicle. Its subcellular location is the secretory vesicle. The protein localises to the synaptic vesicle membrane. It is found in the cell membrane. The protein resides in the synapse. It localises to the synaptosome. It carries out the reaction L-glutamate(out) = L-glutamate(in). It catalyses the reaction 3 Na(+)(out) + phosphate(out) = 3 Na(+)(in) + phosphate(in). The catalysed reaction is chloride(in) = chloride(out). Its activity is regulated as follows. The L-glutamate uniporter activity exhibits a biphasic dependence on chloride concentration. Chloride channel activity is allosterically activated by lumenal H(+) and Cl(-) leading to synaptic vesicles acidification. The L-glutamate transport activity is allosterically activated by lumenal H(+) and Cl(-), preventing non-vesicular L-glutamate release. Multifunctional transporter that transports L-glutamate as well as multiple ions such as chloride, sodium and phosphate. At the synaptic vesicle membrane, mainly functions as an uniporter that mediates the uptake of L-glutamate into synaptic vesicles at presynaptic nerve terminals of excitatory neural cells. The L-glutamate uniporter activity is electrogenic and is driven by the proton electrochemical gradient, mainly by the electrical gradient established by the vacuolar H(+)-ATPase across the synaptic vesicle membrane. In addition, functions as a chloride channel that allows a chloride permeation through the synaptic vesicle membrane that affects the proton electrochemical gradient and promotes synaptic vesicles acidification. At the plasma membrane, following exocytosis, functions as a symporter of Na(+) and phosphate from the extracellular space to the cytoplasm allowing synaptic phosphate homeostasis regulation. The symporter activity is electrogenic. Moreover, operates synergistically with SLC18A3/VACHT under a constant H(+) gradient, thereby allowing striatal vesicular acetylcholine uptake. This is Vesicular glutamate transporter 3 from Mus musculus (Mouse).